The chain runs to 398 residues: MTKTEGKTASAAVKDILLSNPDGLREVIRTVMQEVLEAEMDEALGAAKGERTPERLGYRSGHYGRTLITRVGKLELRVPQDRSGHFSTELFERYQRSERALVATLAEMYVQGVSTRKVKAITEELCGHAFSASSISAINKRLDESLKAFAERSLEEPFAYLILDARYEKVREAGVVMSQAVLIAVGIDWDGRRQILSVEMAGRESRSAWKDFLVRLKGRGLKGVELVVSDDHAGLVAAIGEVIPEAAWQRCYVHFLRNALDHLPRKHGDDCLQELRWLYDRRDLDEAKADLAAWLGKWSVRYPRLTSWVEETIEQTLTFFRLPRQHHKHLKSTNMLERLNEEIRRRTYVVRIFPNTESCLRLVRALAVETHENWMEANRYINMDDLREHKKLALRQAA.

It belongs to the transposase mutator family.

Its function is as follows. Required for the transposition of the insertion element. The polypeptide is Transposase for insertion sequence element ISRM5 (Rhizobium meliloti (strain 1021) (Ensifer meliloti)).